The primary structure comprises 299 residues: Endonuclease G, mitochondrial (299 aa).

Residues 1 to 48 (MQLLRAGLTLALGAGLGAAAESWWRQRADARATPGLLSRLPVLPVAAA) constitute a mitochondrion transit peptide. Thr-130 is subject to Phosphothreonine. His-143 acts as the Proton acceptor in catalysis. Asn-174 provides a ligand contact to Mg(2+). Positions 288–298 (AGSLKAITAGS) are essential for deoxyribonuclease activity. The residue at position 290 (Ser-290) is a Phosphoserine.

This sequence belongs to the DNA/RNA non-specific endonuclease family. In terms of assembly, homodimer; disulfide-linked. Homodimerization is essential for its activity. Interacts with YWHAG. Mg(2+) is required as a cofactor. Post-translationally, GSK3-beta-mediated dual phosphorylations at Thr-130 and Ser-290 is necessary for its interaction with YWHAG and the induction of autophagy.

It is found in the mitochondrion. Functionally, endonuclease that preferentially catalyzes the cleavage of double-stranded 5-hydroxymethylcytosine (5hmC)-modified DNA. The 5hmC-modified nucleotide does not increase the binding affinity, but instead increases the efficiency of cutting and specifies the site of cleavage for the modified DNAs. Shows significantly higher affinity for four- stranded Holliday junction over duplex and single-stranded DNAs. Promotes conservative recombination when the DNA is 5hmC-modified. Promotes autophagy through the suppression of mTOR by its phosphorylation-mediated interaction with YWHAG and its endonuclease activity-mediated DNA damage response. GSK3-beta mediated phosphorylation of ENDOG enhances its interaction with YWHAG, leading to the release of TSC2 and PIK3C3 from YWHAG resulting in mTOR pathway suppression and autophagy initiation. Promotes cleavage of mtDNA in response to oxidative and nitrosative stress, in turn inducing compensatory mtDNA replication. The sequence is that of Endonuclease G, mitochondrial (ENDOG) from Bos taurus (Bovine).